Here is a 407-residue protein sequence, read N- to C-terminus: Multifunctional CCA protein (407 aa).

ATP contacts are provided by Gly8 and Arg11. CTP contacts are provided by Gly8 and Arg11. The Mg(2+) site is built by Asp21 and Asp23. ATP is bound by residues Arg91, Arg137, and Arg140. CTP contacts are provided by Arg91, Arg137, and Arg140. The HD domain occupies 228–329 (TGIHTLLVAE…VKIFNKLDVW (102 aa)).

Belongs to the tRNA nucleotidyltransferase/poly(A) polymerase family. Bacterial CCA-adding enzyme type 1 subfamily. In terms of assembly, monomer. Can also form homodimers and oligomers. Mg(2+) is required as a cofactor. It depends on Ni(2+) as a cofactor.

The enzyme catalyses a tRNA precursor + 2 CTP + ATP = a tRNA with a 3' CCA end + 3 diphosphate. The catalysed reaction is a tRNA with a 3' CCA end + 2 CTP + ATP = a tRNA with a 3' CCACCA end + 3 diphosphate. Functionally, catalyzes the addition and repair of the essential 3'-terminal CCA sequence in tRNAs without using a nucleic acid template. Adds these three nucleotides in the order of C, C, and A to the tRNA nucleotide-73, using CTP and ATP as substrates and producing inorganic pyrophosphate. tRNA 3'-terminal CCA addition is required both for tRNA processing and repair. Also involved in tRNA surveillance by mediating tandem CCA addition to generate a CCACCA at the 3' terminus of unstable tRNAs. While stable tRNAs receive only 3'-terminal CCA, unstable tRNAs are marked with CCACCA and rapidly degraded. The protein is Multifunctional CCA protein of Vibrio vulnificus (strain CMCP6).